Reading from the N-terminus, the 433-residue chain is 3-phosphoshikimate 1-carboxyvinyltransferase (433 aa).

Lys15, Ser16, and Arg20 together coordinate 3-phosphoshikimate. Lys15 provides a ligand contact to phosphoenolpyruvate. Phosphoenolpyruvate is bound by residues Gly96 and Arg124. 3-phosphoshikimate contacts are provided by Ser169, Gln171, Asp318, and Lys345. Position 171 (Gln171) interacts with phosphoenolpyruvate. Asp318 acts as the Proton acceptor in catalysis. Residues Arg349 and Arg393 each contribute to the phosphoenolpyruvate site.

It belongs to the EPSP synthase family. In terms of assembly, monomer.

The protein resides in the cytoplasm. It carries out the reaction 3-phosphoshikimate + phosphoenolpyruvate = 5-O-(1-carboxyvinyl)-3-phosphoshikimate + phosphate. It participates in metabolic intermediate biosynthesis; chorismate biosynthesis; chorismate from D-erythrose 4-phosphate and phosphoenolpyruvate: step 6/7. In terms of biological role, catalyzes the transfer of the enolpyruvyl moiety of phosphoenolpyruvate (PEP) to the 5-hydroxyl of shikimate-3-phosphate (S3P) to produce enolpyruvyl shikimate-3-phosphate and inorganic phosphate. This chain is 3-phosphoshikimate 1-carboxyvinyltransferase, found in Chlorobium phaeovibrioides (strain DSM 265 / 1930) (Prosthecochloris vibrioformis (strain DSM 265)).